A 422-amino-acid chain; its full sequence is Exodeoxyribonuclease 7 large subunit (422 aa).

Belongs to the XseA family. In terms of assembly, heterooligomer composed of large and small subunits.

The protein localises to the cytoplasm. It carries out the reaction Exonucleolytic cleavage in either 5'- to 3'- or 3'- to 5'-direction to yield nucleoside 5'-phosphates.. Bidirectionally degrades single-stranded DNA into large acid-insoluble oligonucleotides, which are then degraded further into small acid-soluble oligonucleotides. In Leptospira interrogans serogroup Icterohaemorrhagiae serovar copenhageni (strain Fiocruz L1-130), this protein is Exodeoxyribonuclease 7 large subunit.